A 210-amino-acid polypeptide reads, in one-letter code: Protein RCR2 (210 aa).

The helical transmembrane segment at 41-61 (WIFFIFFIVALLILLFSTAKV) threads the bilayer. Positions 125–149 (PNGKTEYLAPPPLSEEQASSTDKDL) are disordered. S161 is modified (phosphoserine). Over residues 175–199 (NNFVNGQSNRNEQHSPTVESSSFDV) the composition is skewed to polar residues. Positions 175–210 (NNFVNGQSNRNEQHSPTVESSSFDVNNAPARAKVSK) are disordered. T191 is subject to Phosphothreonine.

The protein to yeast YBR005W.

The protein localises to the membrane. This Saccharomyces cerevisiae (strain ATCC 204508 / S288c) (Baker's yeast) protein is Protein RCR2 (RCR2).